Here is a 246-residue protein sequence, read N- to C-terminus: tRNA (guanine-N(1)-)-methyltransferase (246 aa).

Residues G112 and 131–136 (IGDYVL) each bind S-adenosyl-L-methionine.

This sequence belongs to the RNA methyltransferase TrmD family. In terms of assembly, homodimer.

The protein resides in the cytoplasm. The enzyme catalyses guanosine(37) in tRNA + S-adenosyl-L-methionine = N(1)-methylguanosine(37) in tRNA + S-adenosyl-L-homocysteine + H(+). Its function is as follows. Specifically methylates guanosine-37 in various tRNAs. The polypeptide is tRNA (guanine-N(1)-)-methyltransferase (Fervidobacterium nodosum (strain ATCC 35602 / DSM 5306 / Rt17-B1)).